The sequence spans 675 residues: PML-RARA-regulated adapter molecule 1 (675 aa).

The span at 1 to 19 (MGSNQDFRNLQAKFQTSQP) shows a compositional bias: polar residues. 2 disordered regions span residues 1 to 473 (MGSN…GPIN) and 523 to 562 (TDDS…PQQL). A compositionally biased stretch (basic and acidic residues) spans 23–35 (ELFRKTPKPELNK). The span at 43-58 (TELSEQPKKSSQSELS) shows a compositional bias: polar residues. Residues 141-150 (PKPEFGELSK) are compositionally biased toward basic and acidic residues. Composition is skewed to polar residues over residues 224 to 242 (RKSQ…SPSK), 251 to 264 (HSPQ…PKNN), and 322 to 331 (LQPSDLTRAS). Residue S374 is modified to Phosphoserine. The span at 407–422 (SECSLPSASAGSSPQC) shows a compositional bias: polar residues. Over residues 462–471 (PAKPALPPGP) the composition is skewed to pro residues. The segment covering 537–546 (LSTQQATRWP) has biased composition (polar residues). The 79-residue stretch at 578–656 (KAEREFRKKF…PRTALLPLET (79 aa)) folds into the SH3 domain.

As to quaternary structure, interacts with SKAP2, LCP2 and DBNL. May interact with LYN. Interacts with NEK6. In terms of processing, may be phosphorylated on tyrosines. As to expression, expressed in bone marrow and mature neutrophils. Weakly expressed in macrophages and mast cells.

May be involved in integrin signaling in neutrophils. Binds to PtdIns(4)P. This Mus musculus (Mouse) protein is PML-RARA-regulated adapter molecule 1 (Pram1).